A 254-amino-acid chain; its full sequence is Peptide methionine sulfoxide reductase A5 (254 aa).

The first 33 residues, 1 to 33, serve as a signal peptide directing secretion; sequence MAISLKRNRFFIPYTNLVFFFFLCVSLLDKTVS.

This sequence belongs to the MsrA Met sulfoxide reductase family.

The catalysed reaction is L-methionyl-[protein] + [thioredoxin]-disulfide + H2O = L-methionyl-(S)-S-oxide-[protein] + [thioredoxin]-dithiol. The enzyme catalyses [thioredoxin]-disulfide + L-methionine + H2O = L-methionine (S)-S-oxide + [thioredoxin]-dithiol. Functionally, catalyzes the reduction of methionine sulfoxide (MetSO) to methionine in proteins. Plays a protective role against oxidative stress by restoring activity to proteins that have been inactivated by methionine oxidation. MSRA family specifically reduces the MetSO S-enantiomer. This is Peptide methionine sulfoxide reductase A5 (MSRA5) from Arabidopsis thaliana (Mouse-ear cress).